Reading from the N-terminus, the 194-residue chain is Fe/S biogenesis protein NfuA (194 aa).

Positions 152 and 155 each coordinate [4Fe-4S] cluster.

Belongs to the NfuA family. In terms of assembly, homodimer. The cofactor is [4Fe-4S] cluster.

Its function is as follows. Involved in iron-sulfur cluster biogenesis. Binds a 4Fe-4S cluster, can transfer this cluster to apoproteins, and thereby intervenes in the maturation of Fe/S proteins. Could also act as a scaffold/chaperone for damaged Fe/S proteins. The chain is Fe/S biogenesis protein NfuA from Pseudomonas putida (strain ATCC 700007 / DSM 6899 / JCM 31910 / BCRC 17059 / LMG 24140 / F1).